The following is a 347-amino-acid chain: Quinolinate synthase (347 aa).

Iminosuccinate is bound by residues His47 and Ser68. Residue Cys113 participates in [4Fe-4S] cluster binding. Iminosuccinate is bound by residues 139–141 and Ser156; that span reads YAN. Residue Cys200 coordinates [4Fe-4S] cluster. Iminosuccinate-binding positions include 226–228 and Thr243; that span reads HPE. Cys297 serves as a coordination point for [4Fe-4S] cluster.

This sequence belongs to the quinolinate synthase family. Type 1 subfamily. [4Fe-4S] cluster serves as cofactor.

The protein resides in the cytoplasm. It carries out the reaction iminosuccinate + dihydroxyacetone phosphate = quinolinate + phosphate + 2 H2O + H(+). Its pathway is cofactor biosynthesis; NAD(+) biosynthesis; quinolinate from iminoaspartate: step 1/1. Functionally, catalyzes the condensation of iminoaspartate with dihydroxyacetone phosphate to form quinolinate. This Escherichia fergusonii (strain ATCC 35469 / DSM 13698 / CCUG 18766 / IAM 14443 / JCM 21226 / LMG 7866 / NBRC 102419 / NCTC 12128 / CDC 0568-73) protein is Quinolinate synthase.